Consider the following 248-residue polypeptide: 23S rRNA (guanosine(2553)-2'-O)-methyltransferase RlmP (248 aa).

Residues Arg123, Gly204, Val224, and Leu233 each contribute to the S-adenosyl-L-methionine site.

This sequence belongs to the class IV-like SAM-binding methyltransferase superfamily. RNA methyltransferase TrmH family. Homodimer.

The protein localises to the cytoplasm. It catalyses the reaction guanosine(2553) in 23S rRNA + S-adenosyl-L-methionine = 2'-O-methylguanosine(2553) in 23S rRNA + S-adenosyl-L-homocysteine + H(+). In terms of biological role, specifically methylates the ribose of guanosine 2553 (G2553) in 23S rRNA. When the target G2553 is mutated, is able to methylate the ribose of adenosine, but it cannot methylate cytidine nor uridine. Modifies free 23S rRNA but not the fully assembled ribosome nor the 50S subunit, suggesting that the modification occurs early during ribosome biogenesis. This Bacillus subtilis (strain 168) protein is 23S rRNA (guanosine(2553)-2'-O)-methyltransferase RlmP.